Here is a 130-residue protein sequence, read N- to C-terminus: U-scoloptoxin(17)-Er1a (130 aa).

The N-terminal stretch at 1–18 (MKLLVFALFLQVVQLSLA) is a signal peptide.

It belongs to the scoloptoxin-17 family. Contains 4 disulfide bonds. Expressed by the venom gland.

It is found in the secreted. The protein is U-scoloptoxin(17)-Er1a of Ethmostigmus rubripes (Giant centipede).